The sequence spans 201 residues: Adenylyl-sulfate kinase (201 aa).

Position 35–42 (35–42 (GLSGSGKS)) interacts with ATP. The active-site Phosphoserine intermediate is Ser109.

This sequence belongs to the APS kinase family.

The catalysed reaction is adenosine 5'-phosphosulfate + ATP = 3'-phosphoadenylyl sulfate + ADP + H(+). It participates in sulfur metabolism; hydrogen sulfide biosynthesis; sulfite from sulfate: step 2/3. Catalyzes the synthesis of activated sulfate. In Erwinia tasmaniensis (strain DSM 17950 / CFBP 7177 / CIP 109463 / NCPPB 4357 / Et1/99), this protein is Adenylyl-sulfate kinase.